The chain runs to 194 residues: ATP-dependent Clp protease proteolytic subunit (194 aa).

The active-site Nucleophile is the Ser-97. His-122 is a catalytic residue.

This sequence belongs to the peptidase S14 family. In terms of assembly, fourteen ClpP subunits assemble into 2 heptameric rings which stack back to back to give a disk-like structure with a central cavity, resembling the structure of eukaryotic proteasomes.

The protein localises to the cytoplasm. The catalysed reaction is Hydrolysis of proteins to small peptides in the presence of ATP and magnesium. alpha-casein is the usual test substrate. In the absence of ATP, only oligopeptides shorter than five residues are hydrolyzed (such as succinyl-Leu-Tyr-|-NHMec, and Leu-Tyr-Leu-|-Tyr-Trp, in which cleavage of the -Tyr-|-Leu- and -Tyr-|-Trp bonds also occurs).. Functionally, cleaves peptides in various proteins in a process that requires ATP hydrolysis. Has a chymotrypsin-like activity. Plays a major role in the degradation of misfolded proteins. The protein is ATP-dependent Clp protease proteolytic subunit of Thermus thermophilus (strain ATCC BAA-163 / DSM 7039 / HB27).